Here is a 77-residue protein sequence, read N- to C-terminus: RNA-binding protein Hfq (77 aa).

Positions 10–70 (DAFLNHVRKA…ISTIMPGQPI (61 aa)) constitute a Sm domain.

This sequence belongs to the Hfq family. In terms of assembly, homohexamer.

RNA chaperone that binds small regulatory RNA (sRNAs) and mRNAs to facilitate mRNA translational regulation in response to envelope stress, environmental stress and changes in metabolite concentrations. Also binds with high specificity to tRNAs. The sequence is that of RNA-binding protein Hfq from Cereibacter sphaeroides (strain ATCC 17029 / ATH 2.4.9) (Rhodobacter sphaeroides).